Consider the following 48-residue polypeptide: Large ribosomal subunit protein eL40 (48 aa).

The protein belongs to the eukaryotic ribosomal protein eL40 family.

The protein is Large ribosomal subunit protein eL40 of Methanocella arvoryzae (strain DSM 22066 / NBRC 105507 / MRE50).